The following is an 89-amino-acid chain: Small ribosomal subunit protein bS16 (89 aa).

Belongs to the bacterial ribosomal protein bS16 family.

In Chloroflexus aurantiacus (strain ATCC 29364 / DSM 637 / Y-400-fl), this protein is Small ribosomal subunit protein bS16.